The sequence spans 177 residues: Cell division inhibitor SulA (177 aa).

A ftsZ binding region spans residues 112-118; sequence ALASGNY. The lon protease binding stretch occupies residues 170-177; the sequence is KIHSIHYH.

It belongs to the SulA family. As to quaternary structure, interacts with FtsZ. In terms of processing, is rapidly cleaved and degraded by the Lon protease once DNA damage is repaired.

In terms of biological role, component of the SOS system and an inhibitor of cell division. Accumulation of SulA causes rapid cessation of cell division and the appearance of long, non-septate filaments. In the presence of GTP, binds a polymerization-competent form of FtsZ in a 1:1 ratio, thus inhibiting FtsZ polymerization and therefore preventing it from participating in the assembly of the Z ring. This mechanism prevents the premature segregation of damaged DNA to daughter cells during cell division. This is Cell division inhibitor SulA from Photorhabdus laumondii subsp. laumondii (strain DSM 15139 / CIP 105565 / TT01) (Photorhabdus luminescens subsp. laumondii).